Reading from the N-terminus, the 423-residue chain is Serine/threonine-protein kinase ppk25 (423 aa).

Residues Ser-36 and Ser-38 each carry the phosphoserine modification. Residues 53 to 305 form the Protein kinase domain; the sequence is WIIKKTIGAG…LEQAAKFPWL (253 aa). ATP contacts are provided by residues 59–67 and Lys-82; that span reads IGAGSMGKV. Asp-175 acts as the Proton acceptor in catalysis.

It belongs to the protein kinase superfamily. Ser/Thr protein kinase family.

It is found in the cytoplasm. It carries out the reaction L-seryl-[protein] + ATP = O-phospho-L-seryl-[protein] + ADP + H(+). The catalysed reaction is L-threonyl-[protein] + ATP = O-phospho-L-threonyl-[protein] + ADP + H(+). The chain is Serine/threonine-protein kinase ppk25 (ppk25) from Schizosaccharomyces pombe (strain 972 / ATCC 24843) (Fission yeast).